Here is a 39-residue protein sequence, read N- to C-terminus: Photosystem II reaction center protein L (39 aa).

Residues 18–38 form a helical membrane-spanning segment; that stretch reads SLYLGLLLVFVLGILFSSYFF.

This sequence belongs to the PsbL family. PSII is composed of 1 copy each of membrane proteins PsbA, PsbB, PsbC, PsbD, PsbE, PsbF, PsbH, PsbI, PsbJ, PsbK, PsbL, PsbM, PsbT, PsbX, PsbY, PsbZ, Psb30/Ycf12, peripheral proteins PsbO, CyanoQ (PsbQ), PsbU, PsbV and a large number of cofactors. It forms dimeric complexes.

It is found in the cellular thylakoid membrane. Functionally, one of the components of the core complex of photosystem II (PSII). PSII is a light-driven water:plastoquinone oxidoreductase that uses light energy to abstract electrons from H(2)O, generating O(2) and a proton gradient subsequently used for ATP formation. It consists of a core antenna complex that captures photons, and an electron transfer chain that converts photonic excitation into a charge separation. This subunit is found at the monomer-monomer interface and is required for correct PSII assembly and/or dimerization. This chain is Photosystem II reaction center protein L, found in Trichormus variabilis (strain ATCC 29413 / PCC 7937) (Anabaena variabilis).